Reading from the N-terminus, the 495-residue chain is L-2,4-diaminobutyrate decarboxylase (495 aa).

N6-(pyridoxal phosphate)lysine is present on Lys-312.

It belongs to the group II decarboxylase family. It depends on pyridoxal 5'-phosphate as a cofactor.

The catalysed reaction is L-2,4-diaminobutanoate + H(+) = propane-1,3-diamine + CO2. Its pathway is siderophore biosynthesis; rhizobactin biosynthesis. This chain is L-2,4-diaminobutyrate decarboxylase (rhbB), found in Rhizobium meliloti (strain 1021) (Ensifer meliloti).